The following is a 38-amino-acid chain: Potassium channel toxin alpha-KTx 2.15 (38 aa).

Intrachain disulfides connect C7-C29, C13-C34, and C17-C36.

The protein belongs to the short scorpion toxin superfamily. Potassium channel inhibitor family. Alpha-KTx 02 subfamily. As to expression, expressed by the venom gland.

It is found in the secreted. Its function is as follows. Blocks human voltage-gated potassium channels Kv1.2/KCNA2 (IC(50)=0.3 nM), Kv1.3/KCNA3 (IC(50)=8.3 nM) and Shaker IR (with inactivation domain removed) (IC(50)=12 nM) and blocks intermediate conductance calcium-activated potassium channel KCa3.1/KCNN4 (IC(50)=6.4 nM). The chain is Potassium channel toxin alpha-KTx 2.15 from Centruroides tecomanus (Scorpion).